Reading from the N-terminus, the 67-residue chain is Large ribosomal subunit protein bL31 (67 aa).

C16, C18, C37, and C40 together coordinate Zn(2+).

It belongs to the bacterial ribosomal protein bL31 family. Type A subfamily. In terms of assembly, part of the 50S ribosomal subunit. Zn(2+) is required as a cofactor.

Binds the 23S rRNA. The sequence is that of Large ribosomal subunit protein bL31 from Methylococcus capsulatus (strain ATCC 33009 / NCIMB 11132 / Bath).